A 319-amino-acid polypeptide reads, in one-letter code: Olfactory receptor 51F1 (319 aa).

The Extracellular portion of the chain corresponds to 1-37 (MLQNQDTMEILSNSTSKFPTFLLTGIPGLESAHVWIS). Residues 38 to 58 (IPFCCFYAIALSGNSVILFVI) traverse the membrane as a helical segment. The Cytoplasmic portion of the chain corresponds to 59–75 (ITQQSLHEPMYYFLFRL). Residues 76–96 (SATDLGLTVSSLSTTLGILWF) traverse the membrane as a helical segment. Residues 97–106 (EAREISLYSC) are Extracellular-facing. The cysteines at positions 106 and 188 are disulfide-linked. A helical membrane pass occupies residues 107-127 (IVQMFFLHGFTFMESGVLVAT). At 128–149 (AFDRYVAICDPLRYTTILTNSR) the chain is on the cytoplasmic side. A helical transmembrane segment spans residues 150 to 170 (IIQMGLLMITRAIVLILPLLL). The Extracellular segment spans residues 171-211 (LLKPLYFCRMNALSHSYCYHPDVIQLACSDIRANSICGLID). Residues 212-232 (LILTTGIDTPCIVLSYILIIH) form a helical membrane-spanning segment. At 233-249 (SVLRIASPEEWHKVFST) the chain is on the cytoplasmic side. Residues 250–270 (CVSHVGAVAFFYIHMLSLSLV) traverse the membrane as a helical segment. At 271-279 (YRYGRSAPR) the chain is on the extracellular side. The chain crosses the membrane as a helical span at residues 280–300 (VVHSVMANVYLLLPPVLNPII). Topologically, residues 301–319 (DSVKTKQIRKAMLSLLLTK) are cytoplasmic.

The protein belongs to the G-protein coupled receptor 1 family.

It is found in the cell membrane. Functionally, odorant receptor. This chain is Olfactory receptor 51F1 (OR51F1), found in Homo sapiens (Human).